The primary structure comprises 96 residues: MSLTPEQVRQVAHLARLKLDEDEMERMRLQLSSILDHIEMLQAIDVTDVPITAQVTDLTNVTRIDAVTSSLPVDAALANAPDRQGDYFRVKAVFEE.

It belongs to the GatC family. As to quaternary structure, heterotrimer of A, B and C subunits.

The enzyme catalyses L-glutamyl-tRNA(Gln) + L-glutamine + ATP + H2O = L-glutaminyl-tRNA(Gln) + L-glutamate + ADP + phosphate + H(+). The catalysed reaction is L-aspartyl-tRNA(Asn) + L-glutamine + ATP + H2O = L-asparaginyl-tRNA(Asn) + L-glutamate + ADP + phosphate + 2 H(+). Allows the formation of correctly charged Asn-tRNA(Asn) or Gln-tRNA(Gln) through the transamidation of misacylated Asp-tRNA(Asn) or Glu-tRNA(Gln) in organisms which lack either or both of asparaginyl-tRNA or glutaminyl-tRNA synthetases. The reaction takes place in the presence of glutamine and ATP through an activated phospho-Asp-tRNA(Asn) or phospho-Glu-tRNA(Gln). The protein is Aspartyl/glutamyl-tRNA(Asn/Gln) amidotransferase subunit C of Herpetosiphon aurantiacus (strain ATCC 23779 / DSM 785 / 114-95).